The following is a 390-amino-acid chain: Phosphopentomutase (390 aa).

Positions 10, 282, 287, 323, 324, and 335 each coordinate Mn(2+).

The protein belongs to the phosphopentomutase family. It depends on Mn(2+) as a cofactor.

It localises to the cytoplasm. The catalysed reaction is 2-deoxy-alpha-D-ribose 1-phosphate = 2-deoxy-D-ribose 5-phosphate. It catalyses the reaction alpha-D-ribose 1-phosphate = D-ribose 5-phosphate. Its pathway is carbohydrate degradation; 2-deoxy-D-ribose 1-phosphate degradation; D-glyceraldehyde 3-phosphate and acetaldehyde from 2-deoxy-alpha-D-ribose 1-phosphate: step 1/2. Its function is as follows. Isomerase that catalyzes the conversion of deoxy-ribose 1-phosphate (dRib-1-P) and ribose 1-phosphate (Rib-1-P) to deoxy-ribose 5-phosphate (dRib-5-P) and ribose 5-phosphate (Rib-5-P), respectively. The polypeptide is Phosphopentomutase (Lachnoclostridium phytofermentans (strain ATCC 700394 / DSM 18823 / ISDg) (Clostridium phytofermentans)).